The chain runs to 524 residues: Cytochrome P450 4F3 (524 aa).

Residues 19-39 traverse the membrane as a helical segment; it reads WLLLLLAGASCLLAYILTPIY. Cysteine 468 contributes to the heme binding site.

It belongs to the cytochrome P450 family. Heme serves as cofactor. Highest level in polymorphonuclear leukocytes and dendritic cells. Detectable in lymph nodes, spleen, bone marrow and peripheral blood. Highly expressed in ovary. Very low level in liver, kidney, and smooth muscle. Expressed in neutrophils (at protein level).

Its subcellular location is the endoplasmic reticulum membrane. The protein resides in the microsome membrane. The catalysed reaction is leukotriene B4 + reduced [NADPH--hemoprotein reductase] + O2 = 18-hydroxy-leukotriene B4 + oxidized [NADPH--hemoprotein reductase] + H2O + H(+). It carries out the reaction leukotriene B4 + reduced [NADPH--hemoprotein reductase] + O2 = 19-hydroxy-leukotriene B4 + oxidized [NADPH--hemoprotein reductase] + H2O + H(+). Its pathway is lipid metabolism; leukotriene B4 degradation. In terms of biological role, a cytochrome P450 monooxygenase involved in the metabolism of the pro-inflammatory lipid mediator leukotriene B4 (LTB4). Hydroxylates at the omega-1 and omega-2 positions LTB4. This oxidation step leads to LTB4 inactivation, which is postulated to be a crucial part of the resolution of inflammation. Mechanistically, uses molecular oxygen inserting one oxygen atom into a substrate, and reducing the second into a water molecule, with two electrons provided by NADPH via cytochrome P450 reductase (CPR; NADPH-ferrihemoprotein reductase). The polypeptide is Cytochrome P450 4F3 (Mus musculus (Mouse)).